We begin with the raw amino-acid sequence, 269 residues long: Type II iodothyronine deiodinase (269 aa).

At Met1–Leu9 the chain is on the lumenal side. A helical; Signal-anchor for type III membrane protein membrane pass occupies residues Ile10–Leu34. The Cytoplasmic portion of the chain corresponds to Lys35–Thr269. Sec133 is a catalytic residue. 2 non-standard amino acids (selenocysteine) are found at residues Sec133 and Sec266.

It belongs to the iodothyronine deiodinase family. In terms of assembly, predominantly monomer. Can form homodimers but homodimerization is not essential for enzyme activity. Interacts with USP20 and USP33. Interacts with MARCHF6. Post-translationally, ubiquitinated by MARCHF6, leading to its degradation by the proteasome. Deubiquitinated by USP20 and USP33. More expressed in pituitary than in brain, low to undetectable levels in thyroid and skeletal muscle.

It is found in the endoplasmic reticulum membrane. The enzyme catalyses 3,3',5-triiodo-L-thyronine + iodide + A + H(+) = L-thyroxine + AH2. It carries out the reaction 3,3'-diiodo-L-thyronine + iodide + A + H(+) = 3,3',5'-triiodo-L-thyronine + AH2. The catalysed reaction is 3'-iodo-L-thyronine + iodide + A + H(+) = 3',5'-diiodo-L-thyronine + AH2. It catalyses the reaction 3,3'-diiodothyronamine + iodide + A + H(+) = 3,3',5'-triiodothyronamine + AH2. The enzyme catalyses 3'-iodothyronamine + iodide + A + H(+) = 3',5'-diiodothyronamine + AH2. In terms of biological role, plays a crucial role in the metabolism of thyroid hormones (TH) and has specific roles in TH activation and inactivation by deiodination.Catalyzes the deiodination of L-thyroxine (T4) to 3,5,3'-triiodothyronine (T3) and 3,3',5'-triiodothyronine (rT3) to 3,3'-diiodothyronine (3,3'-T2) via outer-ring deiodination (ORD). Catalyzes the deiodination of 3',5'-diiodothyronine (3',5'-T2) to 3'-monoiodothyronine (3'-T1) via ORD. Catalyzes the phenolic ring deiodinations of 3,3',5'-triiodothyronamine and 3',5'- diiodothyronamine. The sequence is that of Type II iodothyronine deiodinase (DIO2) from Sus scrofa (Pig).